Here is a 380-residue protein sequence, read N- to C-terminus: Probable peptidoglycan glycosyltransferase FtsW (380 aa).

The next 10 helical transmembrane spans lie at 14 to 34 (LLWCTLCLLLIGVTMVTSSSI), 52 to 72 (ILYLVILFFIFKIFLDVPISF), 79 to 99 (IILLISISTLLLVLIIGNSIH), 112 to 131 (MQPSELSKLAMFCYLSNYLS), 141 to 161 (FGGFLKPIIIISFPLILLLVE), 162 to 182 (PDLGTTIVILLTTLSLLFISG), 188 to 208 (FIPTILIIVVTTTVLIIKSPY), 268 to 288 (IIGEELGYIGACTILFMIFFI), 304 to 324 (IFFSGYFAFSIGLWLIFQTLI), and 341 to 361 (PLISYGGSSLIIVSIAIIILI).

It belongs to the SEDS family. FtsW subfamily.

Its subcellular location is the cell membrane. It carries out the reaction [GlcNAc-(1-&gt;4)-Mur2Ac(oyl-L-Ala-gamma-D-Glu-L-Lys-D-Ala-D-Ala)](n)-di-trans,octa-cis-undecaprenyl diphosphate + beta-D-GlcNAc-(1-&gt;4)-Mur2Ac(oyl-L-Ala-gamma-D-Glu-L-Lys-D-Ala-D-Ala)-di-trans,octa-cis-undecaprenyl diphosphate = [GlcNAc-(1-&gt;4)-Mur2Ac(oyl-L-Ala-gamma-D-Glu-L-Lys-D-Ala-D-Ala)](n+1)-di-trans,octa-cis-undecaprenyl diphosphate + di-trans,octa-cis-undecaprenyl diphosphate + H(+). It participates in cell wall biogenesis; peptidoglycan biosynthesis. Peptidoglycan polymerase that is essential for cell division. This Buchnera aphidicola subsp. Baizongia pistaciae (strain Bp) protein is Probable peptidoglycan glycosyltransferase FtsW.